The chain runs to 234 residues: Hydrolase in agr operon (234 aa).

One can recognise a CN hydrolase domain in the interval 1–212 (ILYNKDTDVV…EKELTVTIDI (212 aa)). The active-site Proton acceptor is glutamate 14. Lysine 83 serves as the catalytic Proton donor. The active-site Nucleophile is the cysteine 119.

Belongs to the carbon-nitrogen hydrolase superfamily. NIT1/NIT2 family.

In Staphylococcus lugdunensis, this protein is Hydrolase in agr operon.